We begin with the raw amino-acid sequence, 42 residues long: Potassium channel toxin gamma-KTx 1.8 (42 aa).

Intrachain disulfides connect C5-C23, C11-C34, C20-C39, and C24-C41.

The protein belongs to the ergtoxin family. Gamma-KTx 1 subfamily. As to expression, expressed by the venom gland.

It is found in the secreted. Blocks in a reversible manner human and rat Kv11.1/KCNH2/ERG1 potassium channels. Also completely and irreversibly blocks rat Kv11.2/KCNH6/ERG2 and human Kv11.3/KCNH7/ERG3 channels. Also weakly inhibits Kir2.1/KCNJ2 and Kv1.2/KCNA2 potassium channels. This is Potassium channel toxin gamma-KTx 1.8 from Centruroides elegans (Bark scorpion).